The primary structure comprises 543 residues: CTP synthase (543 aa).

The segment at 1-265 (MTRFIFVTGG…DQIVLDKFGL (265 aa)) is amidoligase domain. Residue serine 13 coordinates CTP. Serine 13 lines the UTP pocket. ATP is bound by residues 14-19 (SLGKGI) and aspartate 71. Residues aspartate 71 and glutamate 139 each contribute to the Mg(2+) site. CTP-binding positions include 146-148 (DIE), 186-191 (KTKPTQ), and lysine 222. UTP contacts are provided by residues 186–191 (KTKPTQ) and lysine 222. The Glutamine amidotransferase type-1 domain maps to 290 to 541 (TIAMVGKYMD…IQAAVEQNER (252 aa)). Glycine 351 serves as a coordination point for L-glutamine. The active-site Nucleophile; for glutamine hydrolysis is the cysteine 378. Residues 379–382 (LGMQ), glutamate 402, and arginine 469 contribute to the L-glutamine site. Catalysis depends on residues histidine 514 and glutamate 516.

The protein belongs to the CTP synthase family. Homotetramer.

The catalysed reaction is UTP + L-glutamine + ATP + H2O = CTP + L-glutamate + ADP + phosphate + 2 H(+). The enzyme catalyses L-glutamine + H2O = L-glutamate + NH4(+). It catalyses the reaction UTP + NH4(+) + ATP = CTP + ADP + phosphate + 2 H(+). It participates in pyrimidine metabolism; CTP biosynthesis via de novo pathway; CTP from UDP: step 2/2. Its activity is regulated as follows. Allosterically activated by GTP, when glutamine is the substrate; GTP has no effect on the reaction when ammonia is the substrate. The allosteric effector GTP functions by stabilizing the protein conformation that binds the tetrahedral intermediate(s) formed during glutamine hydrolysis. Inhibited by the product CTP, via allosteric rather than competitive inhibition. Catalyzes the ATP-dependent amination of UTP to CTP with either L-glutamine or ammonia as the source of nitrogen. Regulates intracellular CTP levels through interactions with the four ribonucleotide triphosphates. The chain is CTP synthase from Saccharophagus degradans (strain 2-40 / ATCC 43961 / DSM 17024).